The primary structure comprises 587 residues: Integrator complex subunit 14 (587 aa).

The region spanning 3 to 113 is the VWFA domain; sequence TLIALDASLS…NILQVVVFTD (111 aa). Disordered stretches follow at residues 190 to 211 and 304 to 331; these read KSSDAVEGNPNPNPNPSHKSEL and REKSGSSRRSGNLSAAAKPPKLNLDTSN.

The protein belongs to the Integrator subunit 14 family. As to quaternary structure, belongs to the multiprotein complex Integrator, at least composed of IntS1, IntS2, IntS3, IntS4, omd/IntS5, IntS6, defl/IntS7, IntS8, IntS9, IntS10, IntS11, IntS12, asun/IntS13, IntS14 and IntS15. The core complex associates with protein phosphatase 2A subunits mts/PP2A and Pp2A-29B, to form the Integrator-PP2A (INTAC) complex.

Its subcellular location is the nucleus. Functionally, component of the integrator complex, a multiprotein complex that terminates RNA polymerase II (Pol II) transcription in the promoter-proximal region of genes. The integrator complex provides a quality checkpoint during transcription elongation by driving premature transcription termination of transcripts that are unfavorably configured for transcriptional elongation: the complex terminates transcription by (1) catalyzing dephosphorylation of the C-terminal domain (CTD) of Pol II subunit Polr2A/Rbp1 and Spt5, and (2) degrading the exiting nascent RNA transcript via endonuclease activity. The integrator complex is also involved in the 3'-end processing of the U7 snRNA, and also the spliceosomal snRNAs U1, U2, U4 and U5. The chain is Integrator complex subunit 14 from Drosophila melanogaster (Fruit fly).